A 391-amino-acid chain; its full sequence is MAPRIAMVAGEASGDLLASHLIRAIRARVPDAEFFGIGGPKMQAEGFDARWPCELLAVHGYVDALKRYRELSGIRKKLLKQVRRERPDAFIGVDAPDFNLWLEGKIKAAGIPAIHFVSPSIWAWRGGRIKRIARSVTRMLCMFPFEPELYERAGVPVSYVGHPLADVFPLEPDRAAARERLDIAPERKVVALLPGSRQSEVRNLGELFIETAAMLAQRHPDVLFLVPLATRETRELFSAALARNKGDELPLRMLFGHAVDAMTAADAVLVASGTASLEAALLKRPMVITYRMGKWQYRLMKRMAYLPWIGLPNILCREGLVPELVQDDATPPKLADALERWLVDPAACAALTERFTALHHSLRQNTAEKAAAAVLPYLSSSASCQPVSVSA.

This sequence belongs to the LpxB family.

It catalyses the reaction a lipid X + a UDP-2-N,3-O-bis[(3R)-3-hydroxyacyl]-alpha-D-glucosamine = a lipid A disaccharide + UDP + H(+). The protein operates within bacterial outer membrane biogenesis; LPS lipid A biosynthesis. Its function is as follows. Condensation of UDP-2,3-diacylglucosamine and 2,3-diacylglucosamine-1-phosphate to form lipid A disaccharide, a precursor of lipid A, a phosphorylated glycolipid that anchors the lipopolysaccharide to the outer membrane of the cell. The polypeptide is Lipid-A-disaccharide synthase (Azoarcus sp. (strain BH72)).